Consider the following 607-residue polypeptide: Cyclic-di-GMP receptor FimW (607 aa).

The pilZ-like domain stretch occupies residues 323 to 492 (ERTFQRTQGQ…GGTQMGIEMI (170 aa)). Residues 324-328 (RTFQR) carry the RXXXR motif motif. The D/NXSXXG motif motif lies at 435–440 (NHSPGG). Positions 568-582 (SQFEYRSAEPVNTPS) are enriched in polar residues. The disordered stretch occupies residues 568–607 (SQFEYRSAEPVNTPSDKPVTAPVARPPAGEEDFDSLWKSL).

As to quaternary structure, monomer in the absence of c-di-GMP. Forms dimers in the presence of c-di-GMP.

The protein resides in the cytoplasm. In terms of biological role, high-affinity cyclic-di-GMP binding protein that regulates type IV pili (T4P) elongation. Required for T4P-mediated surface attachment and walking motility during the early phases of surface colonization. Not required for twitching motility. Does not bind related nucleotides such as GMP, GDP, GTP or ATP. This is Cyclic-di-GMP receptor FimW from Pseudomonas aeruginosa (strain ATCC 15692 / DSM 22644 / CIP 104116 / JCM 14847 / LMG 12228 / 1C / PRS 101 / PAO1).